Consider the following 388-residue polypeptide: MSYQPTPEDRFTFGLWTVGWQGRDPFGDATRRALDPVETVQRLAELGAHGVTFHDDDLIPFGSSDTERESHIKRFRQALDATGMTVPMATTNLFTHPVFKDGAFTANDRDVRRYALRKTIRNIDLAAELGAKTYVAWGGREGAESGAAKDVRSALDRMKEAFDLLGEYVTSQGYDLRFAIEPKPNEPRGDILLPTVGHALAFIERLERPELYGVNPEVGHEQMAGLNFPHGIAQALWAGKLFHIDLNGQSGIKYDQDLRFGAGDLRSAFWLVDLLESAGYEGPRHFDFKPPRTEDLDGVWASAAGCMRNYLILKERAAAFRADPEVQAALRASRLDQLAQPTAADGLEDLLADRAAFEDFDVEAAAARGMAFERLDQLAMDHLLGARG.

Active-site residues include histidine 54 and aspartate 57. The Mg(2+) site is built by glutamate 181, glutamate 217, histidine 220, aspartate 245, aspartate 255, aspartate 257, and aspartate 287.

Belongs to the xylose isomerase family. Homotetramer. Mg(2+) is required as a cofactor.

It is found in the cytoplasm. The catalysed reaction is alpha-D-xylose = alpha-D-xylulofuranose. This is Xylose isomerase from Streptomyces corchorusii (Streptomyces chibaensis).